Here is a 1250-residue protein sequence, read N- to C-terminus: Phospholipid-transporting ATPase IC (1250 aa).

Acidic residues-rich tracts occupy residues 1–13 (MDTDYESTYEDDS) and 24–40 (SDDETDDELDSPQTDEP). The tract at residues 1 to 52 (MDTDYESTYEDDSQVPNDDVVPYSDDETDDELDSPQTDEPEQNRRNVQAEQS) is disordered. Over 1-133 (MDTDYESTYE…VLLILQTIPQ (133 aa)) the chain is Cytoplasmic. Residues 134 to 154 (ISTVTWSTTLIPLLLVLGITA) form a helical membrane-spanning segment. Residues 155 to 338 (IKDLVDDIAR…TKIDYLMNYM (184 aa)) lie on the Exoplasmic loop side of the membrane. Residues 339 to 359 (VYTIFVLLILAAAGLAIGQTF) traverse the membrane as a helical segment. The Cytoplasmic segment spans residues 360 to 385 (WEAKLGAANVSWYLYDGNNYSPSYRG). The chain crosses the membrane as a helical span at residues 386 to 406 (FLAFWGYIIVLNTMVPISLYV). Residues 407–956 (SVEVIRLGQS…KFLRYFFYKN (550 aa)) lie on the Exoplasmic loop side of the membrane. Asp-454 functions as the 4-aspartylphosphate intermediate in the catalytic mechanism. Positions 454, 455, 456, 553, 594, 617, 650, 730, 731, 732, 865, and 871 each coordinate ATP. Residue Asp-454 coordinates Mg(2+). Thr-456 provides a ligand contact to Mg(2+). Asp-891 is a binding site for Mg(2+). Residues Asn-894 and Asp-895 each contribute to the ATP site. Asp-895 is a binding site for Mg(2+). The helical transmembrane segment at 957–977 (FSFTLVHFWYSFFNGFSAQTV) threads the bilayer. At 978–980 (YED) the chain is on the cytoplasmic side. Residues 981 to 1001 (WFITLYNVLYSSLPVLLVGLL) traverse the membrane as a helical segment. At 1002–1034 (DQDVSDKLSLAFPRLYVPGQKDLLFNYKKFFLS) the chain is on the exoplasmic loop side. Residues 1035-1055 (LFHGIVTSLIIFFIPYGAFLL) form a helical membrane-spanning segment. Topologically, residues 1056-1069 (TMGQDGEAPSDYQS) are cytoplasmic. The helical transmembrane segment at 1070–1090 (FAVTTATALVITVNFQIGLDT) threads the bilayer. Topologically, residues 1091 to 1092 (SY) are exoplasmic loop. The helical transmembrane segment at 1093–1113 (WTFVNAFSIFGSIAIYFGIMF) threads the bilayer. Residues 1114–1117 (DLHS) lie on the Cytoplasmic side of the membrane. A helical transmembrane segment spans residues 1118–1138 (AGIHVLFPSMFIFTGAAPNAL). Residues 1139–1140 (RQ) are Exoplasmic loop-facing. A helical membrane pass occupies residues 1141 to 1161 (PYLWLTIILTVAFCLLPIVAL). Residues 1162–1250 (RFLAKTIWPS…AQITHFTPQT (89 aa)) are Cytoplasmic-facing.

It belongs to the cation transport ATPase (P-type) (TC 3.A.3) family. Type IV subfamily. Component of a P4-ATPase flippase complex which consists of a catalytic alpha subunit and an accessory beta subunit. The flippase ATP8B1:TMEM30A complex can form an intermediate phosphoenzyme in vitro. Also interacts with beta subunit TMEM30B. It depends on Mg(2+) as a cofactor.

Its subcellular location is the cell membrane. The protein localises to the apical cell membrane. The protein resides in the cell projection. It is found in the stereocilium. It localises to the endoplasmic reticulum. Its subcellular location is the golgi apparatus. It catalyses the reaction ATP + H2O + phospholipidSide 1 = ADP + phosphate + phospholipidSide 2.. It carries out the reaction a 1,2-diacyl-sn-glycero-3-phospho-L-serine(out) + ATP + H2O = a 1,2-diacyl-sn-glycero-3-phospho-L-serine(in) + ADP + phosphate + H(+). Catalytic component of a P4-ATPase flippase complex which catalyzes the hydrolysis of ATP coupled to the transport of aminophospholipids from the outer to the inner leaflet of various membranes and ensures the maintenance of asymmetric distribution of phospholipids. Phospholipid translocation also seems to be implicated in vesicle formation and in uptake of lipid signaling molecules. May also participate in the establishment of the canalicular membrane integrity by ensuring asymmetric distribution of phospholipids in the canicular membrane. The polypeptide is Phospholipid-transporting ATPase IC (atp8b1) (Xenopus tropicalis (Western clawed frog)).